The chain runs to 977 residues: Phosphatidylinositol 4-kinase PIK1alpha (977 aa).

One can recognise a PIK helical domain in the interval 1–125 (MSADITETPN…QAVRNLITKI (125 aa)). The tract at residues 205–261 (MSADIPKGSHSDDETATSSSIKPSLSRSASVPRRNTKKTSLSFSSDESEAYTTDDDD) is disordered. Polar residues predominate over residues 220 to 233 (ATSSSIKPSLSRSA). Over residues 250–261 (DESEAYTTDDDD) the composition is skewed to acidic residues. Residues 679–960 (EDWNTKKQRI…FLIGKSLGSM (282 aa)) form the PI3K/PI4K catalytic domain. Residues 685-691 (KQRIKKS) form a G-loop region. The catalytic loop stretch occupies residues 826-834 (QIKDRHNGN). Residues 845–869 (HIDFGFLLSNSPGSVGFEAAPFKLT) are activation loop.

This sequence belongs to the PI3/PI4-kinase family. Type III PI4K subfamily.

It localises to the nucleus. The enzyme catalyses a 1,2-diacyl-sn-glycero-3-phospho-(1D-myo-inositol) + ATP = a 1,2-diacyl-sn-glycero-3-phospho-(1D-myo-inositol 4-phosphate) + ADP + H(+). Acts on phosphatidylinositol (PI) in the first committed step in the production of the second messenger inositol 1,4,5,-trisphosphate. In Candida albicans (strain SC5314 / ATCC MYA-2876) (Yeast), this protein is Phosphatidylinositol 4-kinase PIK1alpha (PIKALPHA).